The sequence spans 169 residues: ATP-dependent Clp protease adapter protein CLPS2, chloroplastic (169 aa).

The transit peptide at 1-33 (MLATRCKCNLPSRSFVAPARSVRTRALHVEGRF) directs the protein to the chloroplast. The interval 67-92 (DAKTDNGNNGSNTDKDKKSPPGGGNY) is disordered.

It belongs to the ClpS family.

It is found in the plastid. The protein resides in the chloroplast stroma. Small adapter protein that modulate the activity of plastid Clp protease system (CLPC). Probably involved in substrate selection for plastid CLPC. This is ATP-dependent Clp protease adapter protein CLPS2, chloroplastic from Chlamydomonas reinhardtii (Chlamydomonas smithii).